The sequence spans 93 residues: Zinc metalloproteinase-disintegrin-like leucurogin (93 aa).

A Disintegrin domain is found at 8 to 93; sequence PPVCGNELLE…SECPADVGHK (86 aa). Ca(2+)-binding residues include Val-10, Asn-13, Leu-15, Glu-17, Glu-20, and Asp-23. 7 disulfide bridges follow: Cys-11/Cys-40, Cys-22/Cys-35, Cys-24/Cys-30, Cys-34/Cys-57, Cys-48/Cys-54, Cys-53/Cys-79, and Cys-66/Cys-86. A D/ECD-tripeptide motif is present at residues 72 to 74; the sequence is ECD. Positions 74, 75, 77, 89, and 90 each coordinate Ca(2+). A disordered region spans residues 74–93; sequence DPAEHCTGQSSECPADVGHK.

This sequence belongs to the venom metalloproteinase (M12B) family. P-III subfamily. As to quaternary structure, monomer. Requires Zn(2+) as cofactor. In terms of processing, N-glycosylated. Expressed by the venom gland.

The protein localises to the secreted. Its function is as follows. Snake venom zinc metalloprotease that possesses hemorrhagic activity. The disintegrin-like domain has been expressed and named leucurogin. This recombinant disintegrin is able to inhibit collagen-induced platelet aggregation but not ADP- or arachidonic acid-induced platelet aggregation. Furthermore, it inhibits the adhesion of human fibroblasts to collagen type I. It also reduces adhesion and migration of human fibroblasts and inhibits migration and proliferation of human and mouse melanoma cell lines (BLM, and B16-F10-Nex2). In vitro, it inhibits the vascular structures formation by endothelial cells. In addition, it inhibits the growth of experimental Ehrlich tumor and has anti-angiogenesis effect on the sponge implant model. In vivo, when intraperitoneally injected into mice, it inhibits lung metastasis of B16F10 Nex-2 cells. In the treatment of human melanoma, grafted intradermally in the nude mice flank, it inhibits tumor growth. In Bothrops leucurus (Whitetail lancehead), this protein is Zinc metalloproteinase-disintegrin-like leucurogin.